Consider the following 151-residue polypeptide: MKTVMATGTFDIIHPGHGFFLEEARKLGGEDARLVVVLARDSTVRARKRTPIVGEKQRLEVVRMLKPVDEAYLGSETDMFEIVHRIKPDIIAIGPDQKFDVDELRDELRRRGLGCEVRRIEKYRDAELDSTCKIIKRIRSMEFDEDSLKNC.

Residues 9–10 (TF), 14–17 (HPGH), D96, and Y123 contribute to the ATP site.

Belongs to the archaeal FAD synthase family. Homodimer. It depends on a divalent metal cation as a cofactor.

It catalyses the reaction FMN + ATP + H(+) = FAD + diphosphate. It participates in cofactor biosynthesis; FAD biosynthesis; FAD from FMN: step 1/1. Catalyzes the transfer of the AMP portion of ATP to flavin mononucleotide (FMN) to produce flavin adenine dinucleotide (FAD) coenzyme. In Methanothermobacter thermautotrophicus (strain ATCC 29096 / DSM 1053 / JCM 10044 / NBRC 100330 / Delta H) (Methanobacterium thermoautotrophicum), this protein is FAD synthase.